The following is a 90-amino-acid chain: Large ribosomal subunit protein bL31B-1 (90 aa).

Belongs to the bacterial ribosomal protein bL31 family. Type B subfamily. Part of the 50S ribosomal subunit.

The sequence is that of Large ribosomal subunit protein bL31B-1 from Streptomyces coelicolor (strain ATCC BAA-471 / A3(2) / M145).